We begin with the raw amino-acid sequence, 84 residues long: Fulditoxin (84 aa).

The N-terminal stretch at 1-21 is a signal peptide; sequence MKTLLLTLVVVTIVCLDLGNS. 4 disulfide bridges follow: Cys24–Cys41, Cys34–Cys59, Cys63–Cys71, and Cys72–Cys77. His50 is a binding site for Zn(2+).

Belongs to the three-finger toxin family. Short-chain subfamily. As to quaternary structure, homodimer; non-covalently linked. Is able to form a tetramer of dimers in the presence of 2 zinc ions. As to expression, expressed by the venom gland.

It localises to the secreted. Postsynaptic neurotoxin that produces potent, and completely reversible, postsynaptic neuromuscular blockade, as well as broad spectrum inhibition of human muscle and neuronal nicotinic acetylcholine receptors (nAChRs). Inhibition is potent or moderate, depending on the receptor (alpha-1-beta-1-delta-epsilon/CHRNA1-CHRNB1-CHRND-CHRNE (IC(50)=2.56 uM), alpha-4-beta-2/CHRNA4-CHRNB2 (IC(50)=1.8 uM), alpha-7/CHRNA7 (IC(50)=7 uM), and alpha-3-beta-2/CHRNA3-CHRNB2 (IC(50)=12.6 uM)). Acts as a competitive antagonist of ACh. Binds to chicken muscle-type nicotinic acetylcholine receptor (AChR) with high potency compared with the cloned human receptor. Unlike short-chain alpha-3FTxs that only bind to muscle nAChRs, this toxin utilizes dimerization to expand its pharmacological targets to block neuronal nAChRs. In Micrurus fulvius (Eastern coral snake), this protein is Fulditoxin.